A 384-amino-acid polypeptide reads, in one-letter code: Guanine nucleotide-binding protein alpha-2 subunit (384 aa).

Residues 1-23 (MGLVCSRNRRYRDSDPEENAQAA) form a disordered region. Glycine 2 carries the N-myristoyl glycine lipid modification. The S-palmitoyl cysteine moiety is linked to residue cysteine 5. The G-alpha domain occupies 38 to 384 (HIQKLLLLGA…RRNLFEAGLL (347 aa)). The segment at 41–54 (KLLLLGAGESGKST) is G1 motif. Residues glutamate 49, serine 50, glycine 51, lysine 52, serine 53, threonine 54, aspartate 163, leucine 188, tyrosine 189, threonine 194, glycine 222, asparagine 288, lysine 289, aspartate 291, and alanine 356 each coordinate GTP. Position 53 (serine 53) interacts with Mg(2+). Positions 186 to 194 (DVLYARVRT) are G2 motif. Threonine 194 lines the Mg(2+) pocket. The interval 215–224 (YRLFDVGGQR) is G3 motif. The segment at 284–291 (MLFLNKFD) is G4 motif. The segment at 354–359 (TTALDQ) is G5 motif.

It belongs to the G-alpha family. G proteins are composed of 3 units; alpha, beta and gamma. The alpha chain contains the guanine nucleotide binding site. Requires Mg(2+) as cofactor.

Functionally, guanine nucleotide-binding proteins (G proteins) are involved as modulators or transducers in various transmembrane signaling systems. The sequence is that of Guanine nucleotide-binding protein alpha-2 subunit (GPA2) from Pisum sativum (Garden pea).